The primary structure comprises 92 residues: RNA-binding protein Hfq (92 aa).

The Sm domain maps to 9–68 (DPFLNALRRERVPVSIYLVNGIKLQGQVESFDQFVILLKNTVSQMVYKHAISTVVPSRPF).

Belongs to the Hfq family. Homohexamer.

RNA chaperone that binds small regulatory RNA (sRNAs) and mRNAs to facilitate mRNA translational regulation in response to envelope stress, environmental stress and changes in metabolite concentrations. Also binds with high specificity to tRNAs. This chain is RNA-binding protein Hfq, found in Shewanella halifaxensis (strain HAW-EB4).